We begin with the raw amino-acid sequence, 139 residues long: Ribulose bisphosphate carboxylase small subunit (139 aa).

This sequence belongs to the RuBisCO small chain family. As to quaternary structure, heterohexadecamer of 8 large and 8 small subunits.

It localises to the plastid. It is found in the chloroplast. Functionally, ruBisCO catalyzes two reactions: the carboxylation of D-ribulose 1,5-bisphosphate, the primary event in carbon dioxide fixation, as well as the oxidative fragmentation of the pentose substrate in the photorespiration process. Both reactions occur simultaneously and in competition at the same active site. Although the small subunit is not catalytic it is essential for maximal activity. This chain is Ribulose bisphosphate carboxylase small subunit, found in Olisthodiscus luteus (Marine phytoflagellate).